The primary structure comprises 200 residues: NADH-quinone oxidoreductase subunit B (200 aa).

[4Fe-4S] cluster is bound by residues Cys78, Cys79, Cys144, and Cys174.

This sequence belongs to the complex I 20 kDa subunit family. As to quaternary structure, NDH-1 is composed of 14 different subunits. Subunits NuoB, C, D, E, F, and G constitute the peripheral sector of the complex. [4Fe-4S] cluster is required as a cofactor.

The protein localises to the cell membrane. It carries out the reaction a quinone + NADH + 5 H(+)(in) = a quinol + NAD(+) + 4 H(+)(out). Its function is as follows. NDH-1 shuttles electrons from NADH, via FMN and iron-sulfur (Fe-S) centers, to quinones in the respiratory chain. The immediate electron acceptor for the enzyme in this species is believed to be ubiquinone. Couples the redox reaction to proton translocation (for every two electrons transferred, four hydrogen ions are translocated across the cytoplasmic membrane), and thus conserves the redox energy in a proton gradient. In Dehalococcoides mccartyi (strain ATCC BAA-2100 / JCM 16839 / KCTC 5957 / BAV1), this protein is NADH-quinone oxidoreductase subunit B.